A 100-amino-acid chain; its full sequence is Osteocalcin (100 aa).

A signal peptide spans 1–23 (MRALTLLALLALATLCITGQAGA). The propeptide occupies 24–51 (KPSGAESSKGAAFVSKQEGSEVVKRPRR). The Gla domain maps to 52–98 (YLYQWLGAPAPYPDPLEPKREVCELNPDCDELADHIGFQEAYRRFYG). At proline 60 the chain carries 4-hydroxyproline. Positions 68, 72, 75, and 81 each coordinate Ca(2+). Residues glutamate 68, glutamate 72, and glutamate 75 each carry the 4-carboxyglutamate modification. Cysteine 74 and cysteine 80 are disulfide-bonded.

This sequence belongs to the osteocalcin/matrix Gla protein family. In terms of processing, gamma-carboxyglutamate residues are formed by vitamin K dependent carboxylation by GGCX. These residues are essential for the binding of calcium. Decarboxylation promotes the hormone activity.

It is found in the secreted. Its function is as follows. The carboxylated form is one of the main organic components of the bone matrix, which constitutes 1-2% of the total bone protein: it acts as a negative regulator of bone formation and is required to limit bone formation without impairing bone resorption or mineralization. The carboxylated form binds strongly to apatite and calcium. Functionally, the uncarboxylated form acts as a hormone secreted by osteoblasts, which regulates different cellular processes, such as energy metabolism, male fertility and brain development. Regulates of energy metabolism by acting as a hormone favoring pancreatic beta-cell proliferation, insulin secretion and sensitivity and energy expenditure. Uncarboxylated osteocalcin hormone also promotes testosterone production in the testes: acts as a ligand for G protein-coupled receptor GPRC6A at the surface of Leydig cells, initiating a signaling response that promotes the expression of enzymes required for testosterone synthesis in a CREB-dependent manner. Also acts as a regulator of brain development: osteocalcin hormone crosses the blood-brain barrier and acts as a ligand for GPR158 on neurons, initiating a signaling response that prevents neuronal apoptosis in the hippocampus, favors the synthesis of all monoamine neurotransmitters and inhibits that of gamma-aminobutyric acid (GABA). Osteocalcin also crosses the placenta during pregnancy and maternal osteocalcin is required for fetal brain development. The chain is Osteocalcin (BGLAP) from Macaca mulatta (Rhesus macaque).